The chain runs to 380 residues: SAM and SH3 domain-containing protein 3 (380 aa).

Disordered regions lie at residues 1–76 (MLRR…GKKW) and 96–168 (LSEE…SPAP). A compositionally biased stretch (low complexity) spans 22–41 (LQRSSSFKDFAKSKPSSPVV). 3 positions are modified to phosphoserine: Ser-27, Ser-34, and Ser-42. Thr-61 carries the phosphothreonine modification. Ser-97 carries the phosphoserine modification. Thr-103 is subject to Phosphothreonine. Ser-110 carries the phosphoserine modification. Position 112 is a phosphothreonine (Thr-112). Phosphoserine is present on residues Ser-113 and Ser-120. Residues 141-150 (LSRQTSTGSE) are compositionally biased toward polar residues. The region spanning 173 to 234 (PFCGRARVHT…KFIYVDVLPE (62 aa)) is the SH3 domain. The 65-residue stretch at 252 to 316 (PKPKTLHELL…LTAAELLLDY (65 aa)) folds into the SAM domain. Phosphothreonine is present on Thr-318. Over residues 318–327 (TGSEEAEEGA) the composition is skewed to acidic residues. The tract at residues 318-380 (TGSEEAEEGA…LQGLSLSGAP (63 aa)) is disordered. Residue Ser-320 is modified to Phosphoserine. The segment covering 369–380 (EQLQGLSLSGAP) has biased composition (polar residues).

In terms of tissue distribution, preferentially expressed in lymphoid tissues. Expressed in bone marrow, thymus, spleen, lymph nodes and Peyer patches of gut. In the spleen and lymph nodes, expressed in both T- and B-cells. In the thymus, in the medulla and cortex.

May function as a signaling adapter protein in lymphocytes. This chain is SAM and SH3 domain-containing protein 3 (Sash3), found in Mus musculus (Mouse).